Consider the following 210-residue polypeptide: MTSRMAILSGLLFWLLLEWNPAFAYSPRTPDRVSETDIQRLLHGVMEQLGIARPRVEYPAHQAMNLVGPQSIEGGAHEGLQHLGPFGNIPNIVAELTGDNIPKDFSEDQGYPDPPNPCPLGKTADDGCLENAPDTAEFSREFQLDQHLFDPEHDYPGLGKWNKKLLYEKMKGGQRRKRRSVNPYLQGKRLDNVVAKKSVPHFSEEEKEPE.

An N-terminal signal peptide occupies residues 1–24; that stretch reads MTSRMAILSGLLFWLLLEWNPAFA. Cysteine 118 and cysteine 128 are oxidised to a cystine. 2 positions are modified to phosphoserine: serine 139 and serine 203.

It belongs to the 7B2 family. Interacts with PCSK2/PC2 early in the secretory pathway. Dissociation occurs at later stages. Proteolytically cleaved in the Golgi by a furin-like convertase to generate bioactive peptides. Post-translationally, sulfated on tyrosine residues.

The protein resides in the secreted. Functionally, acts as a molecular chaperone for PCSK2/PC2, preventing its premature activation in the regulated secretory pathway. Binds to inactive PCSK2 in the endoplasmic reticulum and facilitates its transport from there to later compartments of the secretory pathway where it is proteolytically matured and activated. Also required for cleavage of PCSK2 but does not appear to be involved in its folding. Plays a role in regulating pituitary hormone secretion. The C-terminal peptide inhibits PCSK2 in vitro. The protein is Neuroendocrine protein 7B2 (Scg5) of Rattus norvegicus (Rat).